The primary structure comprises 129 residues: Small ribosomal subunit protein uS11 (129 aa).

Belongs to the universal ribosomal protein uS11 family. In terms of assembly, part of the 30S ribosomal subunit. Interacts with proteins S7 and S18. Binds to IF-3.

Its function is as follows. Located on the platform of the 30S subunit, it bridges several disparate RNA helices of the 16S rRNA. Forms part of the Shine-Dalgarno cleft in the 70S ribosome. This Staphylococcus saprophyticus subsp. saprophyticus (strain ATCC 15305 / DSM 20229 / NCIMB 8711 / NCTC 7292 / S-41) protein is Small ribosomal subunit protein uS11.